The following is a 125-amino-acid chain: Ribonuclease P protein component (125 aa).

Belongs to the RnpA family. Consists of a catalytic RNA component (M1 or rnpB) and a protein subunit.

It catalyses the reaction Endonucleolytic cleavage of RNA, removing 5'-extranucleotides from tRNA precursor.. Its function is as follows. RNaseP catalyzes the removal of the 5'-leader sequence from pre-tRNA to produce the mature 5'-terminus. It can also cleave other RNA substrates such as 4.5S RNA. The protein component plays an auxiliary but essential role in vivo by binding to the 5'-leader sequence and broadening the substrate specificity of the ribozyme. The protein is Ribonuclease P protein component of Clostridium beijerinckii (strain ATCC 51743 / NCIMB 8052) (Clostridium acetobutylicum).